The chain runs to 329 residues: Quinate dehydrogenase (329 aa).

It catalyses the reaction L-quinate + NAD(+) = 3-dehydroquinate + NADH + H(+). It participates in aromatic compound metabolism; 3,4-dihydroxybenzoate biosynthesis; 3-dehydroquinate from D-quinate (NAD(+) route): step 1/1. This is Quinate dehydrogenase (qutB) from Emericella nidulans (strain FGSC A4 / ATCC 38163 / CBS 112.46 / NRRL 194 / M139) (Aspergillus nidulans).